The sequence spans 395 residues: Putative gustatory receptor 58a (395 aa).

The Cytoplasmic segment spans residues 1–32 (MLLKFMYIYGIGCGLMPAPLKKGQFLLGYKQR). A helical transmembrane segment spans residues 33-53 (WYLIYTACLHGGLLTVLPFTF). Residues 54–72 (PHYMYDDSYMSSNPVLKWT) are Extracellular-facing. Residues 73-93 (FNLTNITRIMAMFSGVLLMWF) form a helical membrane-spanning segment. The Cytoplasmic segment spans residues 94–131 (RRKRILNLGENLILHCLKCKTLDNRSKKYSKLRKRVRN). A helical transmembrane segment spans residues 132 to 152 (VLFQMLLVANLSILLGALILF). The Extracellular portion of the chain corresponds to 153–169 (RIHSVQRISKTAMIVAH). Residues 170 to 190 (ITQFIYVVFMMTGICVILLVL) traverse the membrane as a helical segment. Over 191–250 (HWQSERLQIALKDLCSFLNHEERNSLTLSENKANRSLGKLAKLFKLFAENQRLVREVFRT) the chain is Cytoplasmic. The helical transmembrane segment at 251 to 271 (FDLPIALLLLKMFVTNVNLVY) threads the bilayer. The Extracellular portion of the chain corresponds to 272–288 (HGVQFGNDTIETSSYTR). N-linked (GlcNAc...) asparagine glycosylation is present at N278. A helical membrane pass occupies residues 289–309 (IVGQWVVISHYWSAVLLMNVV). Residues 310 to 366 (DDVTRRSDLKMGDLLREFSHLELVKRDFHLQLELFSDHLRCHPSTYKVCGLFIFNKQ) lie on the Cytoplasmic side of the membrane. A helical membrane pass occupies residues 367-387 (TSLAYFFYVLVQVLVLVQFDL). At 388 to 395 (KNKVEKRN) the chain is on the extracellular side.

The protein belongs to the insect chemoreceptor superfamily. Gustatory receptor (GR) family. Gr22e subfamily. Expressed in the adult labellar chemosensory neurons.

It localises to the cell membrane. Its function is as follows. Probable gustatory receptor which mediates acceptance or avoidance behavior, depending on its substrates. The sequence is that of Putative gustatory receptor 58a (Gr58a) from Drosophila melanogaster (Fruit fly).